A 1201-amino-acid chain; its full sequence is Zinc finger protein sdc-1 (1201 aa).

C2H2-type zinc fingers lie at residues 117-139, 145-168, 233-254, 268-290, 486-513, 521-543, and 652-674; these read LTCA…RGVH, YMCQ…RTSC, SSCH…GNVH, YFCH…WRLH, IVCH…LLRH, YHCA…INDC, and VVCF…DYCH. Residues 1164-1201 are disordered; sequence KRRNSETREHELIELDTDDLNEPSTSDGRYSFGHHGYR. Residues 1167-1176 show a composition bias toward basic and acidic residues; that stretch reads NSETREHELI.

As to quaternary structure, component of the SDC complex, which consists of sdc-1, sdc-2 and sdc-3. Within the complex, interacts with sdc-2 and sdc-3.

The protein resides in the nucleus. Its subcellular location is the chromosome. Functionally, embryonic transcription factor regulating downstream genes involved specifically in the sex determination and dosage compensation pathways, or regulating other genes involved in the coordinate control of both processes. Component of the SDC complex that functions in sex determination and in X chromosome dosage compensation specifically in hermaphrodite (XX) animals. Involved in the recruitment of the condensin I-like dosage compensation complex to the male sex-determining autosomal gene her-1, thereby contributing to its repression and initiating hermaphrodite sexual development. Similarly, might contribute to X-linked gene repression through recruitment of the dosage compensation complex to the X chromosomes in hermaphrodites. Seems to be involved in the depletion of histone H4 lysine 16 acetylation (H4K16ac) on dosage compensated X chromosomes. Plays a role in developmental rate and body fat regulation downstream of the TOR complex 2 pathway. The polypeptide is Zinc finger protein sdc-1 (sdc-1) (Caenorhabditis elegans).